The following is a 236-amino-acid chain: UPF0257 lipoprotein YnfC (236 aa).

The first 16 residues, 1 to 16, serve as a signal peptide directing secretion; the sequence is MKYKLLPCLLAIFLTG. Cys17 carries N-palmitoyl cysteine lipidation. Residue Cys17 is the site of S-diacylglycerol cysteine attachment.

It belongs to the UPF0257 family.

The protein localises to the cell membrane. The sequence is that of UPF0257 lipoprotein YnfC from Escherichia coli O17:K52:H18 (strain UMN026 / ExPEC).